Here is a 208-residue protein sequence, read N- to C-terminus: Thymidylate kinase (208 aa).

10-17 (GPEGSGKT) is a binding site for ATP.

Belongs to the thymidylate kinase family.

It catalyses the reaction dTMP + ATP = dTDP + ADP. Its function is as follows. Phosphorylation of dTMP to form dTDP in both de novo and salvage pathways of dTTP synthesis. In Bacillus cereus (strain Q1), this protein is Thymidylate kinase.